The following is a 47-amino-acid chain: Protein DVU_0533 (47 aa).

Residues 18–37 (WTYILMGVTLLVYVGYWLFL) traverse the membrane as a helical segment.

It localises to the cell membrane. In terms of biological role, HMWC (high-molecular-weight cytochrome c), ORF2, ORF3, ORF4, ORF5 and ORF6 in the HMC operon form a transmembrane protein complex that allows electron flow from the periplasmic hydrogenase to the cytoplasmic enzymes that catalyze reduction of sulfates. The chain is Protein DVU_0533 from Nitratidesulfovibrio vulgaris (strain ATCC 29579 / DSM 644 / CCUG 34227 / NCIMB 8303 / VKM B-1760 / Hildenborough) (Desulfovibrio vulgaris).